The sequence spans 65 residues: Sperm protamine P1 (65 aa).

A disordered region spans residues 1–65; that stretch reads MARYRHSRSR…RYSRRRRRRY (65 aa).

This sequence belongs to the protamine P1 family. Testis.

It is found in the nucleus. It localises to the chromosome. Its function is as follows. Protamines substitute for histones in the chromatin of sperm during the haploid phase of spermatogenesis. They compact sperm DNA into a highly condensed, stable and inactive complex. This Lagorchestes hirsutus (Rufous hare-wallaby) protein is Sperm protamine P1 (PRM1).